Here is a 337-residue protein sequence, read N- to C-terminus: Cytoskeleton protein RodZ (337 aa).

Topologically, residues 1-111 (MNTEATHDQN…LGKRRKKRDG (111 aa)) are cytoplasmic. Residues 19 to 71 (LRNAREQLGLSQQAVAERLCLKVSTVRDIEEDKAPADLASTFLRGYIRSYARL) enclose the HTH cro/C1-type domain. The segment at residues 30 to 49 (QQAVAERLCLKVSTVRDIEE) is a DNA-binding region (H-T-H motif). Residues 112 to 132 (WLMTFTWLVLFVVIGLSGAWW) traverse the membrane as a helical; Signal-anchor for type II membrane protein segment. Over 133–337 (WQDRKAQQEE…TLNAEQSPAQ (205 aa)) the chain is Periplasmic. Residues 144–167 (TTMADQSSAELSSNSEQGQSVPLN) show a composition bias toward polar residues. The segment at 144–235 (TTMADQSSAE…PTAATTPDGA (92 aa)) is disordered. Over residues 168 to 207 (TSTTTDPATTSTPPASVDTTATNTQTPAVTAPAPAVDPQQ) the composition is skewed to low complexity. Positions 208-218 (NAVVSPSQANV) are enriched in polar residues. The span at 219 to 235 (DTAATPAPTAATTPDGA) shows a compositional bias: low complexity.

This sequence belongs to the RodZ family.

The protein localises to the cell inner membrane. Functionally, cytoskeletal protein that is involved in cell-shape control through regulation of the length of the long axis. This is Cytoskeleton protein RodZ from Escherichia coli (strain K12 / MC4100 / BW2952).